The sequence spans 262 residues: Ribosomal RNA small subunit methyltransferase A (262 aa).

S-adenosyl-L-methionine is bound by residues His-16, Leu-18, Gly-43, Glu-64, Asp-89, and Asn-109.

The protein belongs to the class I-like SAM-binding methyltransferase superfamily. rRNA adenine N(6)-methyltransferase family. RsmA subfamily.

The protein localises to the cytoplasm. It carries out the reaction adenosine(1518)/adenosine(1519) in 16S rRNA + 4 S-adenosyl-L-methionine = N(6)-dimethyladenosine(1518)/N(6)-dimethyladenosine(1519) in 16S rRNA + 4 S-adenosyl-L-homocysteine + 4 H(+). Specifically dimethylates two adjacent adenosines (A1518 and A1519) in the loop of a conserved hairpin near the 3'-end of 16S rRNA in the 30S particle. May play a critical role in biogenesis of 30S subunits. The polypeptide is Ribosomal RNA small subunit methyltransferase A (Xanthomonas euvesicatoria pv. vesicatoria (strain 85-10) (Xanthomonas campestris pv. vesicatoria)).